The primary structure comprises 109 residues: Mannose-specific lectin (109 aa).

A Bulb-type lectin domain is found at 25–109 (MQEDCNLVLY…ARWATGTNIH (85 aa)). Alpha-D-mannopyranose contacts are provided by Gln26, Asp28, Asn30, Tyr34, Asp37, Lys38, Trp41, Ala42, Asn44, Gln57, Asp59, Asn61, Tyr65, Ile72, Trp73, Asn76, Asn83, Gln89, Asp91, Asn93, Tyr97, and Trp102. An intrachain disulfide couples Cys29 to Cys52.

As to quaternary structure, homotetramer; antiparallel. Detected in bulbs (at protein level).

The protein localises to the secreted. Strongly inhibited by alpha-1,6-linked mannotriose. Inhibited by various oligosaccharides of P.pastoris mannan including, Man(alpha-l,6)Man-alpha-O-Me, Man(alpha-l,2)Man, Man(alpha-l,3)Man-alpha-O-Me, Man(alpha-l,2)Man, alpha-1,2-linked mannotriose, and Man(alpha-1,6)Glc, in order of decreasing potency. Weakly inhibited by elsinotetraose. Not inhibited by maltose or nigerose. Functionally, D-mannose-binding lectin which binds alpha-D-linked mannose. Displays a high affinity for alpha-(1-6)-mannose oligomers. Able to interact with both terminal and internal alpha-D-mannosyl residues. Displays antiviral activity and therefore may contribute to defense against infections. The chain is Mannose-specific lectin from Narcissus pseudonarcissus (Daffodil).